We begin with the raw amino-acid sequence, 154 residues long: Myoglobin (154 aa).

The region spanning 2–148 (GLSDGEWQLV…FRNDMAAKYK (147 aa)) is the Globin domain. Serine 4 is modified (phosphoserine). Histidine 65 is a nitrite binding site. An O2-binding site is contributed by histidine 65. The residue at position 68 (threonine 68) is a Phosphothreonine. Residue histidine 94 coordinates heme b.

The protein belongs to the globin family. In terms of assembly, monomeric.

Its subcellular location is the cytoplasm. The protein localises to the sarcoplasm. It carries out the reaction Fe(III)-heme b-[protein] + nitric oxide + H2O = Fe(II)-heme b-[protein] + nitrite + 2 H(+). The enzyme catalyses H2O2 + AH2 = A + 2 H2O. Functionally, monomeric heme protein which primary function is to store oxygen and facilitate its diffusion within muscle tissues. Reversibly binds oxygen through a pentacoordinated heme iron and enables its timely and efficient release as needed during periods of heightened demand. Depending on the oxidative conditions of tissues and cells, and in addition to its ability to bind oxygen, it also has a nitrite reductase activity whereby it regulates the production of bioactive nitric oxide. Under stress conditions, like hypoxia and anoxia, it also protects cells against reactive oxygen species thanks to its pseudoperoxidase activity. The protein is Myoglobin (MB) of Saimiri sciureus (Common squirrel monkey).